A 234-amino-acid chain; its full sequence is Pepsin inhibitor Dit33 (234 aa).

An N-terminal signal peptide occupies residues 1–17; it reads MKILFCFVLLAIAALRA. C135 and C230 are oxidised to a cystine. A disordered region spans residues 200–222; sequence RHETSSQPSDATTISTTTQAPVE. Residues 204-219 show a composition bias toward polar residues; that stretch reads SSQPSDATTISTTTQA.

Belongs to the protease inhibitor I33 family.

It is found in the secreted. Its function is as follows. Aspartyl protease inhibitor. This chain is Pepsin inhibitor Dit33 (DIT33), found in Dirofilaria immitis (Canine heartworm).